The chain runs to 377 residues: uncharacterized protein (377 aa).

Positions 1–46 (MLAGLRRRGSMTTPPGPEIPPPHQGGFYSAGHHPQRPWPETPPPKT) are disordered. Composition is skewed to pro residues over residues 14-23 (PPGPEIPPPH) and 36-45 (RPWPETPPPK). A helical transmembrane segment spans residues 53–73 (MLGAVALLAVVGVTVAVTLAV). A disordered region spans residues 77–107 (DKRDAIPPGSGVSGSPTASDIASADDSGPVS).

It localises to the cell inner membrane. May be involved in the ESX-1 / type VII specialized secretion system (T7SS), which exports several proteins including EsxA and EsxB. Involved in DNA conjugation in the recipient strain. This is an uncharacterized protein from Mycolicibacterium smegmatis (strain MKD8) (Mycobacterium smegmatis).